Here is a 373-residue protein sequence, read N- to C-terminus: Spermidine/putrescine import ATP-binding protein PotA (373 aa).

Residues 11 to 241 enclose the ABC transporter domain; that stretch reads IELRSLKKSY…PSNLFVAKFI (231 aa). Residue 43–50 participates in ATP binding; sequence GPSGCGKT.

It belongs to the ABC transporter superfamily. Spermidine/putrescine importer (TC 3.A.1.11.1) family. As to quaternary structure, the complex is composed of two ATP-binding proteins (PotA), two transmembrane proteins (PotB and PotC) and a solute-binding protein (PotD).

The protein resides in the cell inner membrane. The catalysed reaction is ATP + H2O + polyamine-[polyamine-binding protein]Side 1 = ADP + phosphate + polyamineSide 2 + [polyamine-binding protein]Side 1.. In terms of biological role, part of the ABC transporter complex PotABCD involved in spermidine/putrescine import. Responsible for energy coupling to the transport system. The protein is Spermidine/putrescine import ATP-binding protein PotA of Mannheimia succiniciproducens (strain KCTC 0769BP / MBEL55E).